The chain runs to 309 residues: Malate dehydrogenase (309 aa).

Residues 6-11 (GSGRVG) and Asp-31 each bind NAD(+). Substrate contacts are provided by Arg-80 and Arg-86. Residues Asn-93 and 116-118 (TTN) contribute to the NAD(+) site. Asn-118 and Arg-149 together coordinate substrate. Residue His-173 is the Proton acceptor of the active site.

Belongs to the LDH/MDH superfamily.

The enzyme catalyses (S)-malate + NAD(+) = oxaloacetate + NADH + H(+). Its function is as follows. Catalyzes the reversible oxidation of malate to oxaloacetate. The protein is Malate dehydrogenase (mdh) of Caldivirga maquilingensis (strain ATCC 700844 / DSM 13496 / JCM 10307 / IC-167).